Consider the following 98-residue polypeptide: NADH-ubiquinone oxidoreductase chain 4L (98 aa).

Transmembrane regions (helical) follow at residues 2 to 22, 29 to 49, and 61 to 81; these read LSISININLAFAAALLGMLMF, SLLCLEGMMLSMFILSTLIIL, and ILLLVFAACEAAIGLALLVMV.

The protein belongs to the complex I subunit 4L family. Core subunit of respiratory chain NADH dehydrogenase (Complex I) which is composed of 45 different subunits.

The protein localises to the mitochondrion inner membrane. It catalyses the reaction a ubiquinone + NADH + 5 H(+)(in) = a ubiquinol + NAD(+) + 4 H(+)(out). Functionally, core subunit of the mitochondrial membrane respiratory chain NADH dehydrogenase (Complex I) which catalyzes electron transfer from NADH through the respiratory chain, using ubiquinone as an electron acceptor. Part of the enzyme membrane arm which is embedded in the lipid bilayer and involved in proton translocation. The sequence is that of NADH-ubiquinone oxidoreductase chain 4L (MT-ND4L) from Microcebus ravelobensis (Golden-brown mouse lemur).